A 154-amino-acid chain; its full sequence is Glycosylation-dependent cell adhesion molecule 1 (154 aa).

The signal sequence occupies residues 1-18 (MKFLCILLLASLAATSLA). An O-linked (GalNAc...) threonine; partial glycan is attached at T34. Phosphoserine is present on residues S48, S53, S57, S59, and S65. The span at 51–65 (DLSKEPSISREDLIS) shows a compositional bias: basic and acidic residues. Residues 51–115 (DLSKEPSISR…EHAPSDASTT (65 aa)) form a disordered region. N-linked (GlcNAc...) asparagine glycosylation occurs at N96.

It belongs to the PP3/GlyCAM-1 family. In terms of tissue distribution, highly and specifically expressed in the lactating mammary gland.

It localises to the membrane. The polypeptide is Glycosylation-dependent cell adhesion molecule 1 (GLYCAM1) (Capra hircus (Goat)).